We begin with the raw amino-acid sequence, 72 residues long: Cytochrome b-c1 complex subunit 8 (72 aa).

Topologically, residues 2–41 (GKQPVKLKAVVYAISPFQQKIMPGLWKDLPGKIHHKVSEN) are mitochondrial matrix. A helical transmembrane segment spans residues 42-59 (WISATLLLGPLVGTYSYV). At 60-72 (QHFLEKEKLEHRY) the chain is on the mitochondrial intermembrane side.

It belongs to the UQCRQ/QCR8 family. In terms of assembly, component of the ubiquinol-cytochrome c oxidoreductase (cytochrome b-c1 complex, complex III, CIII), a multisubunit enzyme composed of 3 respiratory subunits cytochrome b, cytochrome c1 and Rieske protein, 2 core protein subunits, and additional low-molecular weight protein subunits. The complex exists as an obligatory dimer and forms supercomplexes (SCs) in the inner mitochondrial membrane with cytochrome c oxidase (complex IV, CIV).

Its subcellular location is the mitochondrion inner membrane. Component of the ubiquinol-cytochrome c oxidoreductase, a multisubunit transmembrane complex that is part of the mitochondrial electron transport chain which drives oxidative phosphorylation. The respiratory chain contains 3 multisubunit complexes succinate dehydrogenase (complex II, CII), ubiquinol-cytochrome c oxidoreductase (cytochrome b-c1 complex, complex III, CIII) and cytochrome c oxidase (complex IV, CIV), that cooperate to transfer electrons derived from NADH and succinate to molecular oxygen, creating an electrochemical gradient over the inner membrane that drives transmembrane transport and the ATP synthase. The cytochrome b-c1 complex catalyzes electron transfer from ubiquinol to cytochrome c, linking this redox reaction to translocation of protons across the mitochondrial inner membrane, with protons being carried across the membrane as hydrogens on the quinol. In the process called Q cycle, 2 protons are consumed from the matrix, 4 protons are released into the intermembrane space and 2 electrons are passed to cytochrome c. The chain is Cytochrome b-c1 complex subunit 8 from Solanum tuberosum (Potato).